The following is a 722-amino-acid chain: Inactive serine protease PAMR1 (722 aa).

Positions 1–21 (MALLVWSSLVVASLHLLGTAA) are cleaved as a signal peptide. N-linked (GlcNAc...) asparagine glycosylation is present at Asn98. Intrachain disulfides connect Cys130–Cys152, Cys179–Cys201, Cys241–Cys252, Cys246–Cys262, Cys264–Cys273, Cys282–Cys331, Cys317–Cys344, and Cys416–Cys444. One can recognise a CUB domain in the interval 130-238 (CGEVIQAARG…DGFYVTFEEV (109 aa)). The 38-residue stretch at 237-274 (EVTGCSSTPCFHDGTCIADKTGSYRCACLAGYTGRHCE) folds into the EGF-like domain. 2 consecutive Sushi domains span residues 280–346 (KSCK…VCIK) and 393–446 (KPAL…SCIP). Asn318 carries an N-linked (GlcNAc...) asparagine glycan. One can recognise a Peptidase S1 domain in the interval 447–722 (ICGKLENFNI…FKEWLEKNMK (276 aa)). Residue Asn455 is glycosylated (N-linked (GlcNAc...) asparagine). A disulfide bond links Cys491 and Cys507. N-linked (GlcNAc...) asparagine glycosylation occurs at Asn616. Cystine bridges form between Cys632-Cys651 and Cys663-Cys699.

This sequence belongs to the peptidase S1 family.

It is found in the secreted. Its function is as follows. May play a role in regeneration of skeletal muscle. The protein is Inactive serine protease PAMR1 (pamr1) of Xenopus tropicalis (Western clawed frog).